Reading from the N-terminus, the 807-residue chain is Glycerol-3-phosphate acyltransferase (807 aa).

The HXXXXD motif motif lies at Cys308–Met313.

Belongs to the GPAT/DAPAT family.

It is found in the cell inner membrane. It carries out the reaction sn-glycerol 3-phosphate + an acyl-CoA = a 1-acyl-sn-glycero-3-phosphate + CoA. The protein operates within phospholipid metabolism; CDP-diacylglycerol biosynthesis; CDP-diacylglycerol from sn-glycerol 3-phosphate: step 1/3. In Shewanella sp. (strain ANA-3), this protein is Glycerol-3-phosphate acyltransferase.